The primary structure comprises 574 residues: Zinc finger protein 394 (574 aa).

S12 is modified (phosphoserine). K40 is covalently cross-linked (Glycyl lysine isopeptide (Lys-Gly) (interchain with G-Cter in SUMO2)). The 83-residue stretch at 64–146 (RLHFRQLRYQ…AVVRALQRAL (83 aa)) folds into the SCAN box domain. The region spanning 155 to 230 (VTFEDMAVSL…LQEAFQGKHP (76 aa)) is the KRAB domain. The interval 182 to 202 (ESAQKDSGSTVPPSLESRVEN) is disordered. Residues K203, K228, and K254 each participate in a glycyl lysine isopeptide (Lys-Gly) (interchain with G-Cter in SUMO2) cross-link. A disordered region spans residues 231–284 (LFSKCGSTHEDRVEKQSGNPLPLKLENSAEAEGLNSISDVNKNGSIEGEDSKNN). Over residues 265–274 (NSISDVNKNG) the composition is skewed to polar residues. Residue K282 forms a Glycyl lysine isopeptide (Lys-Gly) (interchain with G-Cter in SUMO2) linkage. 7 consecutive C2H2-type zinc fingers follow at residues 358-380 (YKCGNCGKSFKQRSDLFRHQRIH), 386-408 (YGCQECGKSFSQSAALTKHQRTH), 414-436 (YTCLKCGERFRQNSHLNRHQSTH), 442-463 (FKCEECGETCRISNLFRHQRLH), 469-491 (YKCEECKKSFKQRSDLFKHHRIH), 497-519 (YGCSVCGKRFNQSATLIKHQRIH), and 525-547 (YKCLECGERFRQSTHLIRHQRIH). K443 participates in a covalent cross-link: Glycyl lysine isopeptide (Lys-Gly) (interchain with G-Cter in SUMO2).

This sequence belongs to the krueppel C2H2-type zinc-finger protein family.

It is found in the nucleus. Its function is as follows. May be involved in transcriptional regulation. This Pongo abelii (Sumatran orangutan) protein is Zinc finger protein 394 (ZNF394).